The sequence spans 47 residues: Photosystem II reaction center protein K (47 aa).

A propeptide spanning residues 1 to 10 (MAVYTLDLLA) is cleaved from the precursor. A helical membrane pass occupies residues 19 to 39 (FGPLIDILPIIPLFFLLLAFV).

The protein belongs to the PsbK family. In terms of assembly, PSII is composed of 1 copy each of membrane proteins PsbA, PsbB, PsbC, PsbD, PsbE, PsbF, PsbH, PsbI, PsbJ, PsbK, PsbL, PsbM, PsbT, PsbX, PsbY, PsbZ, Psb30/Ycf12, peripheral proteins PsbO, CyanoQ (PsbQ), PsbU, PsbV and a large number of cofactors. It forms dimeric complexes.

The protein resides in the cellular thylakoid membrane. Functionally, one of the components of the core complex of photosystem II (PSII). PSII is a light-driven water:plastoquinone oxidoreductase that uses light energy to abstract electrons from H(2)O, generating O(2) and a proton gradient subsequently used for ATP formation. It consists of a core antenna complex that captures photons, and an electron transfer chain that converts photonic excitation into a charge separation. The sequence is that of Photosystem II reaction center protein K from Synechococcus sp. (strain CC9311).